Reading from the N-terminus, the 287-residue chain is 4-hydroxybenzoate octaprenyltransferase (287 aa).

The next 6 helical transmembrane spans lie at 23–40 (IGSL…WLAG), 98–118 (ILFV…NKMT), 141–161 (LPQF…YAAV), 163–183 (ESLP…TVAY), 213–233 (IIIG…GNIT), and 235–255 (LGIP…YQQI).

The protein belongs to the UbiA prenyltransferase family. Requires Mg(2+) as cofactor.

It is found in the cell inner membrane. The enzyme catalyses all-trans-octaprenyl diphosphate + 4-hydroxybenzoate = 4-hydroxy-3-(all-trans-octaprenyl)benzoate + diphosphate. Its pathway is cofactor biosynthesis; ubiquinone biosynthesis. Catalyzes the prenylation of para-hydroxybenzoate (PHB) with an all-trans polyprenyl group. Mediates the second step in the final reaction sequence of ubiquinone-8 (UQ-8) biosynthesis, which is the condensation of the polyisoprenoid side chain with PHB, generating the first membrane-bound Q intermediate 3-octaprenyl-4-hydroxybenzoate. In Pectobacterium atrosepticum (strain SCRI 1043 / ATCC BAA-672) (Erwinia carotovora subsp. atroseptica), this protein is 4-hydroxybenzoate octaprenyltransferase.